A 569-amino-acid chain; its full sequence is Arginine--tRNA ligase (569 aa).

A 'HIGH' region motif is present at residues 123 to 133 (ANPNGPLHVGH).

This sequence belongs to the class-I aminoacyl-tRNA synthetase family.

It localises to the cytoplasm. The enzyme catalyses tRNA(Arg) + L-arginine + ATP = L-arginyl-tRNA(Arg) + AMP + diphosphate. The chain is Arginine--tRNA ligase from Methanosarcina mazei (strain ATCC BAA-159 / DSM 3647 / Goe1 / Go1 / JCM 11833 / OCM 88) (Methanosarcina frisia).